Consider the following 515-residue polypeptide: Integrator complex subunit 14 (515 aa).

The 203-residue stretch at 2–204 folds into the VWFA domain; sequence PTVVVMDVSL…KNVQSMFGKL (203 aa). Mg(2+) is bound by residues serine 10, serine 12, and threonine 86. Position 418 is an N6-acetyllysine (lysine 418).

The protein belongs to the Integrator subunit 14 family. In terms of assembly, component of the Integrator complex, composed of core subunits INTS1, INTS2, INTS3, INTS4, INTS5, INTS6, INTS7, INTS8, INTS9/RC74, INTS10, INTS11/CPSF3L, INTS12, INTS13, INTS14 and INTS15. The core complex associates with protein phosphatase 2A subunits PPP2CA and PPP2R1A, to form the Integrator-PP2A (INTAC) complex. INTS14 is part of the tail subcomplex, composed of INTS10, INTS13, INTS14 and INTS15.

Its subcellular location is the nucleus. Its function is as follows. Component of the integrator complex, a multiprotein complex that terminates RNA polymerase II (Pol II) transcription in the promoter-proximal region of genes. The integrator complex provides a quality checkpoint during transcription elongation by driving premature transcription termination of transcripts that are unfavorably configured for transcriptional elongation: the complex terminates transcription by (1) catalyzing dephosphorylation of the C-terminal domain (CTD) of Pol II subunit POLR2A/RPB1 and SUPT5H/SPT5, (2) degrading the exiting nascent RNA transcript via endonuclease activity and (3) promoting the release of Pol II from bound DNA. The integrator complex is also involved in terminating the synthesis of non-coding Pol II transcripts, such as enhancer RNAs (eRNAs), small nuclear RNAs (snRNAs), telomerase RNAs and long non-coding RNAs (lncRNAs). Within the integrator complex, INTS14 is part of the integrator tail module that acts as a platform for the recruitment of transcription factors at promoters. In Rattus norvegicus (Rat), this protein is Integrator complex subunit 14.